A 56-amino-acid polypeptide reads, in one-letter code: Small ribosomal subunit protein uS14 (56 aa).

Zn(2+)-binding residues include Cys21, Cys24, Cys39, and Cys42.

The protein belongs to the universal ribosomal protein uS14 family. Requires Zn(2+) as cofactor.

The chain is Small ribosomal subunit protein uS14 (RPS29) from Triticum aestivum (Wheat).